A 73-amino-acid polypeptide reads, in one-letter code: Cell division protein ZapB (73 aa).

The stretch at 3-67 (LELLSKLETK…WNDKVTGLVG (65 aa)) forms a coiled coil.

Belongs to the ZapB family. Homodimer. The ends of the coiled-coil dimer bind to each other, forming polymers. Interacts with FtsZ.

It is found in the cytoplasm. In terms of biological role, non-essential, abundant cell division factor that is required for proper Z-ring formation. It is recruited early to the divisome by direct interaction with FtsZ, stimulating Z-ring assembly and thereby promoting cell division earlier in the cell cycle. Its recruitment to the Z-ring requires functional FtsA or ZipA. In Shewanella sp. (strain ANA-3), this protein is Cell division protein ZapB.